A 279-amino-acid polypeptide reads, in one-letter code: Ribosomal RNA small subunit methyltransferase A (279 aa).

Residues N27, L29, G54, E76, D102, and N127 each coordinate S-adenosyl-L-methionine.

This sequence belongs to the class I-like SAM-binding methyltransferase superfamily. rRNA adenine N(6)-methyltransferase family. RsmA subfamily.

The protein localises to the cytoplasm. The catalysed reaction is adenosine(1518)/adenosine(1519) in 16S rRNA + 4 S-adenosyl-L-methionine = N(6)-dimethyladenosine(1518)/N(6)-dimethyladenosine(1519) in 16S rRNA + 4 S-adenosyl-L-homocysteine + 4 H(+). Functionally, specifically dimethylates two adjacent adenosines (A1518 and A1519) in the loop of a conserved hairpin near the 3'-end of 16S rRNA in the 30S particle. May play a critical role in biogenesis of 30S subunits. The protein is Ribosomal RNA small subunit methyltransferase A of Mesorhizobium japonicum (strain LMG 29417 / CECT 9101 / MAFF 303099) (Mesorhizobium loti (strain MAFF 303099)).